Reading from the N-terminus, the 232-residue chain is MAHLILIRHGQSLWNAANKFTGWVDVPLSERGRAEATIASCKLRDYRVNVCFTSMLMRAIETAVITLTECDDICGGKIPIIKHEADDENWHGWDNYDGDPAAELPIYPTATLDERYYGDLQGLDKAETTAKYGKEQVQIWRRSYSVRPPGGESLEDTRKRVYPYFTNRILGHIKQGDNVLVAAHGNSLRSIIMILETLSEEEVPKVELATGVPIVYELDKAAHMLSKAVLTN.

Residues 8–15 (RHGQSLWN), 21–22 (TG), Arg58, 114–117 (ERYY), Lys125, 141–142 (RR), and 185–186 (GN) each bind substrate. His9 acts as the Tele-phosphohistidine intermediate in catalysis. The active-site Proton donor/acceptor is Glu114.

It belongs to the phosphoglycerate mutase family. BPG-dependent PGAM subfamily.

The enzyme catalyses (2R)-2-phosphoglycerate = (2R)-3-phosphoglycerate. It participates in carbohydrate degradation; glycolysis; pyruvate from D-glyceraldehyde 3-phosphate: step 3/5. Catalyzes the interconversion of 2-phosphoglycerate and 3-phosphoglycerate. The sequence is that of 2,3-bisphosphoglycerate-dependent phosphoglycerate mutase 1 from Gloeobacter violaceus (strain ATCC 29082 / PCC 7421).